The chain runs to 62 residues: uncharacterized protein (62 aa).

A signal peptide spans M1–A22.

This is an uncharacterized protein from Archaeoglobus fulgidus (strain ATCC 49558 / DSM 4304 / JCM 9628 / NBRC 100126 / VC-16).